Reading from the N-terminus, the 106-residue chain is Large ribosomal subunit protein uL24 (106 aa).

It belongs to the universal ribosomal protein uL24 family. As to quaternary structure, part of the 50S ribosomal subunit.

In terms of biological role, one of two assembly initiator proteins, it binds directly to the 5'-end of the 23S rRNA, where it nucleates assembly of the 50S subunit. Functionally, one of the proteins that surrounds the polypeptide exit tunnel on the outside of the subunit. The protein is Large ribosomal subunit protein uL24 of Desulforamulus reducens (strain ATCC BAA-1160 / DSM 100696 / MI-1) (Desulfotomaculum reducens).